A 279-amino-acid polypeptide reads, in one-letter code: Tryptophan 2,3-dioxygenase (279 aa).

Residues 48–52 (FIVIH), Y110, and R114 contribute to the substrate site. A heme-binding site is contributed by H237. T251 contacts substrate.

Belongs to the tryptophan 2,3-dioxygenase family. In terms of assembly, homotetramer. Requires heme as cofactor.

The enzyme catalyses L-tryptophan + O2 = N-formyl-L-kynurenine. Its pathway is amino-acid degradation; L-tryptophan degradation via kynurenine pathway; L-kynurenine from L-tryptophan: step 1/2. In terms of biological role, heme-dependent dioxygenase that catalyzes the oxidative cleavage of the L-tryptophan (L-Trp) pyrrole ring and converts L-tryptophan to N-formyl-L-kynurenine. Catalyzes the oxidative cleavage of the indole moiety. This chain is Tryptophan 2,3-dioxygenase, found in Bacillus cereus (strain ZK / E33L).